Here is an 855-residue protein sequence, read N- to C-terminus: Pentatricopeptide repeat-containing protein At1g74750 (855 aa).

Positions G21–G40 are disordered. 8 PPR repeats span residues D358–P392, N393–P427, D428–P462, D463–P497, N498–P532, D533–P567, D568–P602, and N603–P637. In terms of domain architecture, Smr spans I755–E838.

It belongs to the PPR family. P subfamily.

In Arabidopsis thaliana (Mouse-ear cress), this protein is Pentatricopeptide repeat-containing protein At1g74750.